Reading from the N-terminus, the 240-residue chain is MELYNIKYAIDPTNKIVIEQVDNVDAFVHILEPGQEVFDETLSQYHQFPGVVSSIIFPQLVLNTIISVLSEDGSLLTLKLENTCFNFHVCNKRFVFGNLPAAVVNNETKQKLRIGAPIFAGKKLVSVVTAFHRVGENEWLLPVTGIREASQLSGHMKVLNGVRVEKWRPNMSVYGTVQLPYDKIKQHALEQENKTPNALESCVLFYKDSEIRITYNKGDYEIMHLRMPGPLIQPNTIYYS.

Residue H46 is the Proton donor of the active site. The active-site Shared with catalytic histidine of dimeric partner is Y181. The active-site Proton acceptor; shared with catalytic histidine of dimeric partner is the K185.

This sequence belongs to the poxin family. As to quaternary structure, homodimer.

It catalyses the reaction 2',3'-cGAMP + H2O = Gp(2'-5')Ap(3') + H(+). Functionally, nuclease that cleaves host 2',3'-cGAMP. The polypeptide is Poxin (P26) (Lepidoptera (butterflies and moths)).